The chain runs to 71 residues: Large ribosomal subunit protein bL31 (71 aa).

This sequence belongs to the bacterial ribosomal protein bL31 family. Type A subfamily. As to quaternary structure, part of the 50S ribosomal subunit.

Functionally, binds the 23S rRNA. This Mycoplasmopsis synoviae (strain 53) (Mycoplasma synoviae) protein is Large ribosomal subunit protein bL31 (rpmE).